The primary structure comprises 262 residues: Plant intracellular Ras-group-related LRR protein 7 (262 aa).

LRR repeat units lie at residues 19–42 (WRSTGIVALRDARLKVVPNEVLQV), 43–66 (GNSLRILDLTNNKIAEIPQEVGTL), 68–89 (NMQRLVLAGNLVESIPANIGYL), 90–112 (RNLKILTLDRNKISVLPEELGSL), 113–135 (SNLQQLSISQNSLSRLPKSVGDL), 137–158 (NMLLLNVSDNKLIALPESIGGC), 159–181 (SSLEELQANGNSIEDVPSSICNL), 182–204 (VCLKSLSLNGNKIRQLPQNLLKD), and 206–231 (KALQNISLHDNPISMDQFQQMDGFTE).

It belongs to the SHOC2 family. As to expression, widely expressed and preferentially in leaf sheathes.

Leucine-rich repeat protein that likely mediates protein interactions, possibly in the context of signal transduction. The polypeptide is Plant intracellular Ras-group-related LRR protein 7 (IRL7) (Oryza sativa subsp. japonica (Rice)).